Reading from the N-terminus, the 93-residue chain is Small ribosomal subunit protein uS19 (93 aa).

Belongs to the universal ribosomal protein uS19 family.

Protein S19 forms a complex with S13 that binds strongly to the 16S ribosomal RNA. The sequence is that of Small ribosomal subunit protein uS19 from Salinispora tropica (strain ATCC BAA-916 / DSM 44818 / JCM 13857 / NBRC 105044 / CNB-440).